The chain runs to 243 residues: Probable transcriptional regulatory protein LCABL_11860 (243 aa).

Residues 1–23 (MSGHSKWHNIQGRKNAQDSKRGK) form a disordered region.

Belongs to the TACO1 family.

The protein localises to the cytoplasm. In Lacticaseibacillus casei (strain BL23) (Lactobacillus casei), this protein is Probable transcriptional regulatory protein LCABL_11860.